The primary structure comprises 190 residues: Secreted isochorismatase effector Isc1 (190 aa).

Residues Asp26, Lys100, and Cys133 contribute to the active site.

This sequence belongs to the isochorismatase family.

Its subcellular location is the secreted. It localises to the host cytoplasm. The protein resides in the host nucleus. It carries out the reaction isochorismate + H2O = (2S,3S)-2,3-dihydroxy-2,3-dihydrobenzoate + pyruvate. Functionally, secreted isochorismatase required for full virulence of V.dahliae. Suppresses salicylate-mediated innate immunity of the host by disrupting the plant salicylate metabolism pathway via hydrolysis of its isochorismate precursor. This chain is Secreted isochorismatase effector Isc1, found in Verticillium dahliae (strain VdLs.17 / ATCC MYA-4575 / FGSC 10137) (Verticillium wilt).